We begin with the raw amino-acid sequence, 192 residues long: Bifunctional protein PyrR (192 aa).

The PRPP-binding signature appears at 107-119; sequence VVLVDDVLFSGRT.

The protein belongs to the purine/pyrimidine phosphoribosyltransferase family. PyrR subfamily.

It catalyses the reaction UMP + diphosphate = 5-phospho-alpha-D-ribose 1-diphosphate + uracil. Functionally, regulates the transcription of the pyrimidine nucleotide (pyr) operon in response to exogenous pyrimidines. Its function is as follows. Also displays a weak uracil phosphoribosyltransferase activity which is not physiologically significant. This chain is Bifunctional protein PyrR, found in Corynebacterium efficiens (strain DSM 44549 / YS-314 / AJ 12310 / JCM 11189 / NBRC 100395).